The following is a 429-amino-acid chain: D-amino acid dehydrogenase (429 aa).

An FAD-binding site is contributed by 3–17 (VLILGSGVIGTTTAW).

Belongs to the DadA oxidoreductase family. Requires FAD as cofactor.

It catalyses the reaction a D-alpha-amino acid + A + H2O = a 2-oxocarboxylate + AH2 + NH4(+). Its pathway is amino-acid degradation; D-alanine degradation; NH(3) and pyruvate from D-alanine: step 1/1. Its function is as follows. Oxidative deamination of D-amino acids. This is D-amino acid dehydrogenase from Xanthomonas campestris pv. campestris (strain B100).